Here is a 346-residue protein sequence, read N- to C-terminus: DnaJ protein ERDJ3B (346 aa).

The signal sequence occupies residues 1 to 23 (MAIRWSELCIVLFALSYAICVLA). The J domain maps to 26 to 91 (SYYDVLQVPK…EKREIYNKYG (66 aa)). Asn267 is a glycosylation site (N-linked (GlcNAc...) asparagine).

As to quaternary structure, interacts with SDF2 and MED37A/BIP1. In terms of processing, N-glycosylated. As to expression, expressed in leaves, flower buds and flowers.

Its subcellular location is the endoplasmic reticulum lumen. Regulates protein folding in the endoplasmic reticulum (ER) lumen. Forms a complex in the ER with SDF2 and MED37A/BIP1 which is required for the proper accumulation and function of the surface-exposed leucine-rich repeat receptor kinases EFR involved in pathogen-associated molecular pattern (PAMP) triggered immunity. The polypeptide is DnaJ protein ERDJ3B (ERDJ3B) (Arabidopsis thaliana (Mouse-ear cress)).